The primary structure comprises 256 residues: Ribonuclease T2 (256 aa).

The signal sequence occupies residues 1–24 (MRPAALRGALLGCLCLALLCLGGA). C48 and C55 are disulfide-bonded. H65 is an active-site residue. Cystine bridges form between C75–C121, C184–C241, and C202–C213. N76 and N106 each carry an N-linked (GlcNAc...) asparagine glycan. Catalysis depends on residues E114 and H118. An N-linked (GlcNAc...) asparagine glycan is attached at N212.

It belongs to the RNase T2 family. Ubiquitous. Higher expression levels observed in the temporal lobe and fetal brain.

It localises to the secreted. The protein localises to the lysosome lumen. The protein resides in the endoplasmic reticulum lumen. Its subcellular location is the mitochondrion intermembrane space. It catalyses the reaction a ribonucleotidyl-ribonucleotide-RNA + H2O = a 3'-end 3'-phospho-ribonucleotide-RNA + a 5'-end dephospho-ribonucleoside-RNA + H(+). The catalysed reaction is an adenylyl-uridine-RNA = a 3'-end 2',3'-cyclophospho-AMP-RNA + a 5'-end dephospho-uridine-RNA. The enzyme catalyses a guanylyl-uridine-RNA = a 3'-end 2',3'-cyclophospho-GMP-RNA + a 5'-end dephospho-uridine-RNA. Inhibited by Zn(2+) and Cu(2+). Its function is as follows. Ribonuclease that plays an essential role in innate immune response by recognizing and degrading RNAs from microbial pathogens that are subsequently sensed by TLR8. Cleaves preferentially single-stranded RNA molecules between purine and uridine residues, which critically contributes to the supply of catabolic uridine and the generation of purine-2',3'-cyclophosphate-terminated oligoribonucleotides. In turn, RNase T2 degradation products promote the RNA-dependent activation of TLR8. In plasmacytoid dendritic cells, it cooperates with PLD3 or PLD4 5'-&gt;3' exonucleases to process RNA fragments and release 2',3'-cyclic guanosine monophosphate (2',3'-cGMP), a potent stimulatory ligand for TLR7. Also plays a key role in degradation of mitochondrial RNA and processing of non-coding RNA imported from the cytosol into mitochondria. Participates as well in degradation of mitochondrion-associated cytosolic rRNAs. This Homo sapiens (Human) protein is Ribonuclease T2 (RNASET2).